Consider the following 423-residue polypeptide: Lipase member M (423 aa).

Positions 1–33 are cleaved as a signal peptide; that stretch reads MLETLSRQWIVSHRMEMWLLILVAYMFQRNVNS. Asn48 is a glycosylation site (N-linked (GlcNAc...) asparagine). In terms of domain architecture, AB hydrolase-1 spans 92–392; that stretch reads PVVLLQHGLV…EWAHVDFIWG (301 aa). Residue Ser186 is the Nucleophile of the active site. A disulfide bond links Cys260 and Cys269. Residues Asp357 and His386 each act as charge relay system in the active site.

It belongs to the AB hydrolase superfamily. Lipase family. Exclusively expressed in the epidermis within the granular keratinocytes.

Its subcellular location is the secreted. Its function is as follows. Plays a highly specific role in the last step of keratinocyte differentiation. May have an essential function in lipid metabolism of the most differentiated epidermal layers. In Homo sapiens (Human), this protein is Lipase member M (LIPM).